We begin with the raw amino-acid sequence, 374 residues long: Proteinase-activated receptor 3 (374 aa).

The N-terminal stretch at 1–21 (MKALIFAAAGLLLLLPTFCQS) is a signal peptide. Positions 22–38 (GMENDTNNLAKPTLPIK) are cleaved as a propeptide — removed for receptor activation. N-linked (GlcNAc...) asparagine glycosylation is found at Asn25 and Asn82. At 39–94 (TFRGAPPNSFEEFPFSALEGWTGATITVKIKCPEESASHLHVKNATMGYLTSSLST) the chain is on the extracellular side. Residues 95 to 120 (KLIPAIYLLVFVVGVPANAVTLWMLF) traverse the membrane as a helical segment. Residues 121 to 128 (FRTRSICT) are Cytoplasmic-facing. A helical transmembrane segment spans residues 129 to 148 (TVFYTNLAIADFLFCVTLPF). Residues 149–167 (KIAYHLNGNNWVFGEVLCR) are Extracellular-facing. A disulfide bridge connects residues Cys166 and Cys245. The helical transmembrane segment at 168–189 (ATTVIFYGNMYCSILLLACISI) threads the bilayer. Residues 190-206 (NRYLAIVHPFTYRGLPK) lie on the Cytoplasmic side of the membrane. A helical membrane pass occupies residues 207 to 230 (HTYALVTCGLVWATVFLYMLPFFI). The Extracellular segment spans residues 231-260 (LKQEYYLVQPDITTCHDVHNTCESSSPFQL). Residues 261–280 (YYFISLAFFGFLIPFVLIIY) form a helical membrane-spanning segment. The Cytoplasmic segment spans residues 281 to 297 (CYAAIIRTLNAYDHRWL). The helical transmembrane segment at 298-322 (WYVKASLLILVIFTICFAPSNIILI) threads the bilayer. The Extracellular segment spans residues 323–336 (IHHANYYYNNTDGL). A glycan (N-linked (GlcNAc...) asparagine) is linked at Asn331. A helical transmembrane segment spans residues 337-361 (YFIYLIALCLGSLNSCLDPFLYFLM). Topologically, residues 362-374 (SKTRNHSTAYLTK) are cytoplasmic.

The protein belongs to the G-protein coupled receptor 1 family. Interacts with INSC/inscuteable and probably GPSM2. Post-translationally, a proteolytic cleavage generates a new N-terminus that functions as a tethered ligand. In terms of tissue distribution, highest expression in the megakaryocytes of the bone marrow, lower in mature megakaryocytes, in platelets and in a variety of other tissues such as heart and gut.

Its subcellular location is the cell membrane. Functionally, receptor for activated thrombin coupled to G proteins that stimulate phosphoinositide hydrolysis. The sequence is that of Proteinase-activated receptor 3 (F2RL2) from Homo sapiens (Human).